The chain runs to 413 residues: Putative F-box protein At3g23970 (413 aa).

Positions 1 to 42 constitute an F-box domain; the sequence is MNIPPELTFEVLVRLPLKSLARFRSVRKEWKLVIDSEFFRDC.

The chain is Putative F-box protein At3g23970 from Arabidopsis thaliana (Mouse-ear cress).